A 139-amino-acid polypeptide reads, in one-letter code: D-ribose pyranase (139 aa).

His-20 functions as the Proton donor in the catalytic mechanism. Residues Asp-28, His-106, and 128–130 each bind substrate; that span reads YAN.

Belongs to the RbsD / FucU family. RbsD subfamily. As to quaternary structure, homodecamer.

It localises to the cytoplasm. The catalysed reaction is beta-D-ribopyranose = beta-D-ribofuranose. It functions in the pathway carbohydrate metabolism; D-ribose degradation; D-ribose 5-phosphate from beta-D-ribopyranose: step 1/2. Catalyzes the interconversion of beta-pyran and beta-furan forms of D-ribose. The protein is D-ribose pyranase of Aliivibrio fischeri (strain ATCC 700601 / ES114) (Vibrio fischeri).